The following is a 216-amino-acid chain: Guanylate kinase (216 aa).

The region spanning 11 to 189 (GVLIVISGPS…AVKKIEAILL (179 aa)) is the Guanylate kinase-like domain. An ATP-binding site is contributed by 18 to 25 (GPSGAGKG).

The protein belongs to the guanylate kinase family.

It localises to the cytoplasm. It carries out the reaction GMP + ATP = GDP + ADP. Essential for recycling GMP and indirectly, cGMP. The chain is Guanylate kinase (gmk) from Clostridium perfringens (strain 13 / Type A).